Reading from the N-terminus, the 105-residue chain is NADH-quinone oxidoreductase subunit K (105 aa).

3 consecutive transmembrane segments (helical) span residues 9–29 (PNYY…GVLV), 34–54 (IVLF…LVTF), and 65–85 (IIAF…LAII).

This sequence belongs to the complex I subunit 4L family. In terms of assembly, NDH-1 is composed of 14 different subunits. Subunits NuoA, H, J, K, L, M, N constitute the membrane sector of the complex.

It localises to the cell membrane. The enzyme catalyses a quinone + NADH + 5 H(+)(in) = a quinol + NAD(+) + 4 H(+)(out). Its function is as follows. NDH-1 shuttles electrons from NADH, via FMN and iron-sulfur (Fe-S) centers, to quinones in the respiratory chain. The immediate electron acceptor for the enzyme in this species is believed to be a menaquinone. Couples the redox reaction to proton translocation (for every two electrons transferred, four hydrogen ions are translocated across the cytoplasmic membrane), and thus conserves the redox energy in a proton gradient. The protein is NADH-quinone oxidoreductase subunit K of Salinispora arenicola (strain CNS-205).